Reading from the N-terminus, the 221-residue chain is Glycerol metabolism activator (221 aa).

One can recognise a Response regulatory domain in the interval 3–120 (KILIADDHPL…QMTDAIEQIL (118 aa)). At aspartate 55 the chain carries 4-aspartylphosphate. The HTH luxR-type domain occupies 149–214 (APELLQALTR…QAILSAGDID (66 aa)). A DNA-binding region (H-T-H motif) is located at residues 173–192 (NKQIAYNLDIAETTVKAHVS).

Functionally, positive activator for glycerol metabolism. Regulates the expression of qedA in a positive manner and governs the expression of ADH I and ADH IIB. General regulator of quinoprotein ethanol oxidation and affects expression of ADH IIG activity but is not the sole regulator. The protein is Glycerol metabolism activator of Pseudomonas putida (Arthrobacter siderocapsulatus).